A 343-amino-acid polypeptide reads, in one-letter code: Uroporphyrinogen decarboxylase (343 aa).

Substrate-binding positions include 25–29, Phe44, Asp75, Tyr150, Ser205, and His320; that span reads RQAGR.

The protein belongs to the uroporphyrinogen decarboxylase family. As to quaternary structure, homodimer.

Its subcellular location is the cytoplasm. It catalyses the reaction uroporphyrinogen III + 4 H(+) = coproporphyrinogen III + 4 CO2. It functions in the pathway porphyrin-containing compound metabolism; protoporphyrin-IX biosynthesis; coproporphyrinogen-III from 5-aminolevulinate: step 4/4. Functionally, catalyzes the decarboxylation of four acetate groups of uroporphyrinogen-III to yield coproporphyrinogen-III. The chain is Uroporphyrinogen decarboxylase from Mesorhizobium japonicum (strain LMG 29417 / CECT 9101 / MAFF 303099) (Mesorhizobium loti (strain MAFF 303099)).